We begin with the raw amino-acid sequence, 355 residues long: UDP-N-acetylglucosamine--N-acetylmuramyl-(pentapeptide) pyrophosphoryl-undecaprenol N-acetylglucosamine transferase (355 aa).

Residues 15–17 (TGG), asparagine 127, arginine 163, serine 191, isoleucine 244, 263–268 (ALTVSE), and glutamine 288 each bind UDP-N-acetyl-alpha-D-glucosamine.

It belongs to the glycosyltransferase 28 family. MurG subfamily.

It localises to the cell inner membrane. The enzyme catalyses di-trans,octa-cis-undecaprenyl diphospho-N-acetyl-alpha-D-muramoyl-L-alanyl-D-glutamyl-meso-2,6-diaminopimeloyl-D-alanyl-D-alanine + UDP-N-acetyl-alpha-D-glucosamine = di-trans,octa-cis-undecaprenyl diphospho-[N-acetyl-alpha-D-glucosaminyl-(1-&gt;4)]-N-acetyl-alpha-D-muramoyl-L-alanyl-D-glutamyl-meso-2,6-diaminopimeloyl-D-alanyl-D-alanine + UDP + H(+). Its pathway is cell wall biogenesis; peptidoglycan biosynthesis. Its function is as follows. Cell wall formation. Catalyzes the transfer of a GlcNAc subunit on undecaprenyl-pyrophosphoryl-MurNAc-pentapeptide (lipid intermediate I) to form undecaprenyl-pyrophosphoryl-MurNAc-(pentapeptide)GlcNAc (lipid intermediate II). In Cronobacter sakazakii (strain ATCC BAA-894) (Enterobacter sakazakii), this protein is UDP-N-acetylglucosamine--N-acetylmuramyl-(pentapeptide) pyrophosphoryl-undecaprenol N-acetylglucosamine transferase.